The chain runs to 133 residues: Nickel-responsive regulator (133 aa).

Ni(2+) is bound by residues histidine 76, histidine 87, histidine 89, and cysteine 95.

This sequence belongs to the transcriptional regulatory CopG/NikR family. Homotetramer. It depends on Ni(2+) as a cofactor.

In terms of biological role, transcriptional repressor of the nikABCDE operon. Is active in the presence of excessive concentrations of intracellular nickel. This chain is Nickel-responsive regulator, found in Shigella dysenteriae serotype 1 (strain Sd197).